We begin with the raw amino-acid sequence, 158 residues long: 2-C-methyl-D-erythritol 2,4-cyclodiphosphate synthase (158 aa).

Residues aspartate 9 and histidine 11 each coordinate a divalent metal cation. 4-CDP-2-C-methyl-D-erythritol 2-phosphate is bound by residues 9-11 (DVH) and 35-36 (HS). Histidine 43 is an a divalent metal cation binding site. Residues 57–59 (DIG), 62–66 (FPDTD), 101–107 (AQKPKMA), 133–136 (TTTE), phenylalanine 140, and arginine 143 each bind 4-CDP-2-C-methyl-D-erythritol 2-phosphate.

The protein belongs to the IspF family. In terms of assembly, homotrimer. Requires a divalent metal cation as cofactor.

The catalysed reaction is 4-CDP-2-C-methyl-D-erythritol 2-phosphate = 2-C-methyl-D-erythritol 2,4-cyclic diphosphate + CMP. It participates in isoprenoid biosynthesis; isopentenyl diphosphate biosynthesis via DXP pathway; isopentenyl diphosphate from 1-deoxy-D-xylulose 5-phosphate: step 4/6. Involved in the biosynthesis of isopentenyl diphosphate (IPP) and dimethylallyl diphosphate (DMAPP), two major building blocks of isoprenoid compounds. Catalyzes the conversion of 4-diphosphocytidyl-2-C-methyl-D-erythritol 2-phosphate (CDP-ME2P) to 2-C-methyl-D-erythritol 2,4-cyclodiphosphate (ME-CPP) with a corresponding release of cytidine 5-monophosphate (CMP). This is 2-C-methyl-D-erythritol 2,4-cyclodiphosphate synthase from Bacillus licheniformis (strain ATCC 14580 / DSM 13 / JCM 2505 / CCUG 7422 / NBRC 12200 / NCIMB 9375 / NCTC 10341 / NRRL NRS-1264 / Gibson 46).